A 279-amino-acid polypeptide reads, in one-letter code: Sulfur carrier protein FdhD (279 aa).

Catalysis depends on C122, which acts as the Cysteine persulfide intermediate.

The protein belongs to the FdhD family.

The protein localises to the cytoplasm. Its function is as follows. Required for formate dehydrogenase (FDH) activity. Acts as a sulfur carrier protein that transfers sulfur from IscS to the molybdenum cofactor prior to its insertion into FDH. The chain is Sulfur carrier protein FdhD from Thermoplasma volcanium (strain ATCC 51530 / DSM 4299 / JCM 9571 / NBRC 15438 / GSS1).